A 137-amino-acid polypeptide reads, in one-letter code: Putative pre-16S rRNA nuclease (137 aa).

Belongs to the YqgF nuclease family.

Its subcellular location is the cytoplasm. Its function is as follows. Could be a nuclease involved in processing of the 5'-end of pre-16S rRNA. In Anaeromyxobacter sp. (strain Fw109-5), this protein is Putative pre-16S rRNA nuclease.